Consider the following 456-residue polypeptide: Cysteine--tRNA ligase (456 aa).

Residue cysteine 28 coordinates Zn(2+). The short motif at 30-40 (MTVYDYCHLGH) is the 'HIGH' region element. Positions 209, 234, and 238 each coordinate Zn(2+). A 'KMSKS' region motif is present at residues 266–270 (KMSKS). Residue lysine 269 participates in ATP binding.

This sequence belongs to the class-I aminoacyl-tRNA synthetase family. In terms of assembly, monomer. It depends on Zn(2+) as a cofactor.

It localises to the cytoplasm. The enzyme catalyses tRNA(Cys) + L-cysteine + ATP = L-cysteinyl-tRNA(Cys) + AMP + diphosphate. This chain is Cysteine--tRNA ligase, found in Dechloromonas aromatica (strain RCB).